A 180-amino-acid polypeptide reads, in one-letter code: Inner membrane-spanning protein YciB (180 aa).

6 helical membrane passes run 4 to 24 (LLSEIGPVIAFFAGFFYGGGI), 25 to 45 (QHATLYMLITSVICITLCYVI), 49 to 69 (VSKLSIISTTVLLVSGSITLI), 76 to 96 (IKIKPTILYVIFGIIFLMSGI), 118 to 138 (ITLSYRTAAFFFFMAVVNEVV), and 150 to 170 (FKVFGVIPITFIFILLQLPLL).

Belongs to the YciB family.

It localises to the cell inner membrane. Plays a role in cell envelope biogenesis, maintenance of cell envelope integrity and membrane homeostasis. This Rickettsia africae (strain ESF-5) protein is Inner membrane-spanning protein YciB.